The chain runs to 811 residues: Phenylalanine--tRNA ligase beta subunit (811 aa).

The 113-residue stretch at 39-151 folds into the tRNA-binding domain; sequence RTWAAGVVVG…AGLQAGQPVG (113 aa). The B5 domain maps to 409–495; it reads EPEHSITLRL…RLYGYDNFGE (87 aa). Mg(2+) contacts are provided by aspartate 473, aspartate 479, glutamate 482, and glutamate 483. The 94-residue stretch at 717-810 folds into the FDX-ACB domain; the sequence is SSFPASDRDL…LVERFRVTLR (94 aa).

Belongs to the phenylalanyl-tRNA synthetase beta subunit family. Type 1 subfamily. Tetramer of two alpha and two beta subunits. It depends on Mg(2+) as a cofactor.

Its subcellular location is the cytoplasm. The catalysed reaction is tRNA(Phe) + L-phenylalanine + ATP = L-phenylalanyl-tRNA(Phe) + AMP + diphosphate + H(+). This chain is Phenylalanine--tRNA ligase beta subunit, found in Synechococcus sp. (strain ATCC 27144 / PCC 6301 / SAUG 1402/1) (Anacystis nidulans).